Consider the following 192-residue polypeptide: Small ribosomal subunit protein uS4B (192 aa).

Residues 83 to 145 (RRLDNLVYRL…SRKIQTYASN (63 aa)) enclose the S4 RNA-binding domain.

The protein belongs to the universal ribosomal protein uS4 family. Part of the 30S ribosomal subunit. Contacts protein S5. The interaction surface between S4 and S5 is involved in control of translational fidelity.

Functionally, one of the primary rRNA binding proteins, it binds directly to 16S rRNA where it nucleates assembly of the body of the 30S subunit. Its function is as follows. With S5 and S12 plays an important role in translational accuracy. The chain is Small ribosomal subunit protein uS4B (rpsD2) from Clostridium acetobutylicum (strain ATCC 824 / DSM 792 / JCM 1419 / IAM 19013 / LMG 5710 / NBRC 13948 / NRRL B-527 / VKM B-1787 / 2291 / W).